A 347-amino-acid polypeptide reads, in one-letter code: Phosphate acyltransferase (347 aa).

This sequence belongs to the PlsX family. Homodimer. Probably interacts with PlsY.

It localises to the cytoplasm. The enzyme catalyses a fatty acyl-[ACP] + phosphate = an acyl phosphate + holo-[ACP]. It participates in lipid metabolism; phospholipid metabolism. In terms of biological role, catalyzes the reversible formation of acyl-phosphate (acyl-PO(4)) from acyl-[acyl-carrier-protein] (acyl-ACP). This enzyme utilizes acyl-ACP as fatty acyl donor, but not acyl-CoA. The polypeptide is Phosphate acyltransferase (Pediococcus pentosaceus (strain ATCC 25745 / CCUG 21536 / LMG 10740 / 183-1w)).